Here is a 481-residue protein sequence, read N- to C-terminus: Beta-amyrin 28-monooxygenase (481 aa).

A helical transmembrane segment spans residues 4–24; it reads FYVPLLSLFVLFISLSFHFLF. Heme is bound at residue Cys-428.

The protein belongs to the cytochrome P450 family. Heme serves as cofactor. Mostly expressed in roots, and, to a lower extent, in stems and leaves. Accumulates only in the rhizome of plants.

The protein localises to the membrane. The catalysed reaction is beta-amyrin + 3 reduced [NADPH--hemoprotein reductase] + 3 O2 = oleanolate + 3 oxidized [NADPH--hemoprotein reductase] + 4 H2O + 4 H(+). The protein operates within secondary metabolite biosynthesis; terpenoid biosynthesis. In terms of biological role, component of the oleanane-type triterpene saponins (e.g. ginsenosides or panaxosides) biosynthetic pathway. Catalyzes the carboxylation of beta-amyrin at the C-28 position to form oleanolic acid during ginsenoside biosynthesis, a class of tetracyclic triterpenoid saponins. The polypeptide is Beta-amyrin 28-monooxygenase (Panax ginseng (Korean ginseng)).